The primary structure comprises 265 residues: Sulfur carrier protein FdhD (265 aa).

Cysteine 107 (cysteine persulfide intermediate) is an active-site residue.

The protein belongs to the FdhD family.

It is found in the cytoplasm. Required for formate dehydrogenase (FDH) activity. Acts as a sulfur carrier protein that transfers sulfur from IscS to the molybdenum cofactor prior to its insertion into FDH. The chain is Sulfur carrier protein FdhD from Staphylococcus aureus (strain NCTC 8325 / PS 47).